A 434-amino-acid chain; its full sequence is MECLRCLPGLLPRAAQPRRALWTAVARLSLAACGGRATPLRSRSPKASSTARAAGDVLRFRTSDASQATLASVAQVFAVTKFDKEGNVTSFERKKTELYHELALQARDLRFQHVMSITTRNNRIIMRMEYLKAVITPECLLILDYRNLNLEHWLFRELPSQLAGEGQLVTYPLPFEFRAIEALLQYWISTLRGRLSVLQPLILETLDALVDPKHSSVDRSKLHVLLQNGKSLSELETDIKIFKESILELLDEEEMLEELCLTKWSDPHVFEKSSTGIDHAEEMELLLENYYRLAEDLSNEARELRVLIDDSQSIIFINLDSHRNVMMRLNLQLTMGTFSLSLFGLMGVAFGMNLESSLEEDHRVFWLVTGIMFMGSGLIWRRLLSFLGRQLEAPVPPVMTSLPKKTLLANRRMDVKNSLRPEGLGASRTILASR.

A mitochondrion-targeting transit peptide spans 1–53 (MECLRCLPGLLPRAAQPRRALWTAVARLSLAACGGRATPLRSRSPKASSTARA). The Mitochondrial matrix portion of the chain corresponds to 54-330 (AGDVLRFRTS…SHRNVMMRLN (277 aa)). Glu-234, Thr-237, Asp-238, Glu-303, and Asp-320 together coordinate Mg(2+). The helical transmembrane segment at 331–350 (LQLTMGTFSLSLFGLMGVAF) threads the bilayer. Mg(2+)-binding residues include Gly-351 and Asn-353. Positions 351–353 (GMN) match the GMN motif motif. The Mitochondrial intermembrane portion of the chain corresponds to 351–361 (GMNLESSLEED). A helical transmembrane segment spans residues 362–392 (HRVFWLVTGIMFMGSGLIWRRLLSFLGRQLE). The Mitochondrial matrix portion of the chain corresponds to 393 to 434 (APVPPVMTSLPKKTLLANRRMDVKNSLRPEGLGASRTILASR).

The protein belongs to the CorA metal ion transporter (MIT) (TC 1.A.35) family. In terms of assembly, homopentamer. As to expression, ubiquitously expressed.

Its subcellular location is the mitochondrion inner membrane. May be regulated by calcium ions. Its function is as follows. Magnesium transporter that mediates the influx of magnesium into the mitochondrial matrix and regulates magnesium metabolism. Also permeable to calcium, sodium and potassium ions. Required for normal expression of the mitochondrial respiratory complex I subunits. May play a role in maintaining the inner mitochondrial membrane potential. In Mus musculus (Mouse), this protein is Magnesium transporter MRS2 homolog, mitochondrial (Mrs2).